A 116-amino-acid polypeptide reads, in one-letter code: NADH-ubiquinone oxidoreductase chain 3 (116 aa).

3 helical membrane passes run 4-24 (LIIT…IAFW), 56-76 (FFLI…LLPL), and 88-108 (TLIL…YEWI).

It belongs to the complex I subunit 3 family. Core subunit of respiratory chain NADH dehydrogenase (Complex I) which is composed of 45 different subunits. Interacts with TMEM186. Interacts with TMEM242.

The protein localises to the mitochondrion inner membrane. The enzyme catalyses a ubiquinone + NADH + 5 H(+)(in) = a ubiquinol + NAD(+) + 4 H(+)(out). Functionally, core subunit of the mitochondrial membrane respiratory chain NADH dehydrogenase (Complex I) which catalyzes electron transfer from NADH through the respiratory chain, using ubiquinone as an electron acceptor. Essential for the catalytic activity of complex I. In Osphranter robustus (Wallaroo), this protein is NADH-ubiquinone oxidoreductase chain 3.